The primary structure comprises 204 residues: Peptide deformylase (204 aa).

Residues cysteine 131 and histidine 174 each coordinate Fe cation. Residue glutamate 175 is part of the active site. Histidine 178 serves as a coordination point for Fe cation.

Belongs to the polypeptide deformylase family. The cofactor is Fe(2+).

The catalysed reaction is N-terminal N-formyl-L-methionyl-[peptide] + H2O = N-terminal L-methionyl-[peptide] + formate. Its function is as follows. Removes the formyl group from the N-terminal Met of newly synthesized proteins. Requires at least a dipeptide for an efficient rate of reaction. N-terminal L-methionine is a prerequisite for activity but the enzyme has broad specificity at other positions. In Streptococcus equi subsp. zooepidemicus (strain MGCS10565), this protein is Peptide deformylase.